The primary structure comprises 380 residues: Flap endonuclease 1 (380 aa).

The N-domain stretch occupies residues 1–104 (MGIKGLSQLI…GELTKRAEKR (104 aa)). Asp34 lines the Mg(2+) pocket. Residues Arg47 and Arg70 each coordinate DNA. Mg(2+) contacts are provided by Asp86, Glu158, Glu160, Asp179, and Asp181. The interval 122–253 (DIDKFNRRLV…KKAVELINKH (132 aa)) is I-domain. Position 158 (Glu158) interacts with DNA. DNA-binding residues include Gly231 and Asp233. Residue Asp233 participates in Mg(2+) binding. Residues 336-344 (TQGRLDSFF) are interaction with PCNA. The tract at residues 342 to 380 (SFFKVLPSTPNPKRKIEDKKTPASKKAKTTGGKPGRKPK) is disordered. The segment covering 363–380 (PASKKAKTTGGKPGRKPK) has biased composition (basic residues).

The protein belongs to the XPG/RAD2 endonuclease family. FEN1 subfamily. As to quaternary structure, interacts with PCNA. Three molecules of FEN1 bind to one PCNA trimer with each molecule binding to one PCNA monomer. PCNA stimulates the nuclease activity without altering cleavage specificity. Mg(2+) is required as a cofactor. Phosphorylated. Phosphorylation upon DNA damage induces relocalization to the nuclear plasma.

It localises to the nucleus. Its subcellular location is the nucleolus. It is found in the nucleoplasm. The protein resides in the mitochondrion. Functionally, structure-specific nuclease with 5'-flap endonuclease and 5'-3' exonuclease activities involved in DNA replication and repair. During DNA replication, cleaves the 5'-overhanging flap structure that is generated by displacement synthesis when DNA polymerase encounters the 5'-end of a downstream Okazaki fragment. It enters the flap from the 5'-end and then tracks to cleave the flap base, leaving a nick for ligation. Also involved in the long patch base excision repair (LP-BER) pathway, by cleaving within the apurinic/apyrimidinic (AP) site-terminated flap. Acts as a genome stabilization factor that prevents flaps from equilibrating into structures that lead to duplications and deletions. Also possesses 5'-3' exonuclease activity on nicked or gapped double-stranded DNA, and exhibits RNase H activity. Also involved in replication and repair of rDNA and in repairing mitochondrial DNA. The polypeptide is Flap endonuclease 1 (Aedes aegypti (Yellowfever mosquito)).